The sequence spans 510 residues: NAD(P)H-quinone oxidoreductase subunit 2 A, chloroplastic (510 aa).

The next 13 membrane-spanning stretches (helical) occupy residues 24–44 (LLLF…GLIL), 57–77 (TPWL…ALLF), 99–119 (IFQF…VEYI), 124–144 (MAIT…MFLC), 149–169 (LITI…LSGY), 183–203 (YLLM…WLYG), 229–249 (ISIA…PAPF), 295–315 (WHLL…LIAI), 323–343 (MLAY…IVGD), 354–374 (YMLF…LFGL), 395–415 (ALSS…AGFF), 418–438 (LYLF…IGLL), and 484–504 (MIVC…IIAI).

Belongs to the complex I subunit 2 family. In terms of assembly, NDH is composed of at least 16 different subunits, 5 of which are encoded in the nucleus.

It is found in the plastid. It localises to the chloroplast thylakoid membrane. It catalyses the reaction a plastoquinone + NADH + (n+1) H(+)(in) = a plastoquinol + NAD(+) + n H(+)(out). The enzyme catalyses a plastoquinone + NADPH + (n+1) H(+)(in) = a plastoquinol + NADP(+) + n H(+)(out). In terms of biological role, NDH shuttles electrons from NAD(P)H:plastoquinone, via FMN and iron-sulfur (Fe-S) centers, to quinones in the photosynthetic chain and possibly in a chloroplast respiratory chain. The immediate electron acceptor for the enzyme in this species is believed to be plastoquinone. Couples the redox reaction to proton translocation, and thus conserves the redox energy in a proton gradient. This Nuphar advena (Common spatterdock) protein is NAD(P)H-quinone oxidoreductase subunit 2 A, chloroplastic.